Here is a 313-residue protein sequence, read N- to C-terminus: DNA-directed RNA polymerase subunit alpha (313 aa).

The interval 1-227 is alpha N-terminal domain (alpha-NTD); that stretch reads MMLDVAPPRF…DFFGLFAEGY (227 aa). The interval 242-313 is alpha C-terminal domain (alpha-CTD); sequence RPVITDERPI…YGYTLESGRE (72 aa).

This sequence belongs to the RNA polymerase alpha chain family. In terms of assembly, homodimer. The RNAP catalytic core consists of 2 alpha, 1 beta, 1 beta' and 1 omega subunit. When a sigma factor is associated with the core the holoenzyme is formed, which can initiate transcription.

It catalyses the reaction RNA(n) + a ribonucleoside 5'-triphosphate = RNA(n+1) + diphosphate. DNA-dependent RNA polymerase catalyzes the transcription of DNA into RNA using the four ribonucleoside triphosphates as substrates. This is DNA-directed RNA polymerase subunit alpha from Rubrobacter xylanophilus (strain DSM 9941 / JCM 11954 / NBRC 16129 / PRD-1).